Reading from the N-terminus, the 1972-residue chain is TP53-binding protein 1 (1972 aa).

Disordered stretches follow at residues 24–273 (DSQP…VAAM), 290–332 (QIQK…CSLA), and 346–507 (GQRS…LGLS). A phosphoserine mark is found at S25 and S63. The span at 82–91 (EHLKENKVAD) shows a compositional bias: basic and acidic residues. Residues 94-121 (DSSNLDTCGSISQVIEQLPQPNRTSSVL) show a composition bias toward polar residues. 2 positions are modified to phosphoserine: S105 and S124. The segment covering 138-149 (ELEQKEKEKEED) has biased composition (basic and acidic residues). The segment covering 151 to 168 (SGNTTHSLGAEDTASSQL) has biased composition (polar residues). S166, S176, and S178 each carry phosphoserine. The segment covering 195–205 (LQSVTTNSGYT) has biased composition (polar residues). K217 participates in a covalent cross-link: Glycyl lysine isopeptide (Lys-Gly) (interchain with G-Cter in SUMO1); alternate. Residue K217 forms a Glycyl lysine isopeptide (Lys-Gly) (interchain with G-Cter in SUMO2); alternate linkage. A phosphoserine mark is found at S222, S265, and S294. Polar residues-rich tracts occupy residues 300–322 (LSTQEDLFDQSNKTVSSDGCSTP) and 346–361 (GQRSLVQDSLSTNSSD). A Phosphothreonine modification is found at T302. Residues S366, S380, S395, S398, S429, S452, and S464 each carry the phosphoserine modification. Positions 426-441 (STVSPQASTPISQSTP) are enriched in polar residues. Positions 442–452 (VFPPGSLPIPS) are enriched in pro residues. Over residues 481–490 (HSSSLTVECS) the composition is skewed to polar residues. The span at 491–501 (KTSEIEPKNSP) shows a compositional bias: basic and acidic residues. Residues S500, S507, S518, S523, and S525 each carry the phosphoserine modification. Polar residues predominate over residues 520-531 (SEYSQSPKMESL). Residues 520–556 (SEYSQSPKMESLSSHRIDEDGENTQIEDTEPMSPVLN) form a disordered region. Acidic residues predominate over residues 538 to 549 (EDGENTQIEDTE). A phosphothreonine mark is found at T543 and T548. A phosphoserine mark is found at S552, S566, and S580. The segment at 568–595 (LMNPAQDGEVQLSQNDDKTKGDDTDTRD) is disordered. Over residues 582–595 (NDDKTKGDDTDTRD) the composition is skewed to basic and acidic residues. A phosphoserine mark is found at S630, S635, S639, and S640. The segment at 649 to 687 (EIKEHHPEEGSSGSEVEEIPETPCESQGEELKEENMESV) is disordered. T670 is modified (phosphothreonine). Phosphoserine is present on residues S692, S724, S727, S771, S809, S830, S831, and S834. The tract at residues 742 to 911 (EQEAWEEATS…TPFHFTLPKE (170 aa)) is disordered. Residues 798-816 (AENRLDTKEEKSVEYEGDL) are compositionally biased toward basic and acidic residues. The segment covering 839 to 848 (RADDPLRLDQ) has biased composition (basic and acidic residues). Residues 849-864 (ELQQPQTQEKTSNSLT) show a composition bias toward polar residues. Residue T855 is modified to Phosphothreonine. Residue K868 forms a Glycyl lysine isopeptide (Lys-Gly) (interchain with G-Cter in SUMO1); alternate linkage. Residue K868 forms a Glycyl lysine isopeptide (Lys-Gly) (interchain with G-Cter in SUMO2); alternate linkage. The span at 890–902 (HASQSFCESSSET) shows a compositional bias: polar residues. Residue T922 is modified to Phosphothreonine. K930 participates in a covalent cross-link: Glycyl lysine isopeptide (Lys-Gly) (interchain with G-Cter in SUMO2). Residues S970 and S975 each carry the phosphoserine modification. A Glycyl lysine isopeptide (Lys-Gly) (interchain with G-Cter in SUMO2) cross-link involves residue K984. Disordered stretches follow at residues 997-1028 (EASEESLQFNLEKPATGERKNGSTAVAESVAS) and 1045-1103 (ENEA…VSPA). Polar residues predominate over residues 1018–1028 (GSTAVAESVAS). S1028 is modified (phosphoserine). T1056 carries the post-translational modification Phosphothreonine. S1068 is modified (phosphoserine). Positions 1071 to 1083 (EEEKEKLEGDHTI) are enriched in basic and acidic residues. Phosphoserine is present on residues S1086, S1094, S1101, and S1114. Residues 1127–1139 (DQKEGRSTNKENP) show a composition bias toward basic and acidic residues. Disordered stretches follow at residues 1127–1148 (DQKEGRSTNKENPSKALIERPS), 1188–1232 (NFGK…QPPH), and 1269–1478 (VTEE…DGLD). Phosphoserine is present on S1148. Residues 1188–1200 (NFGKQDATVQTER) are compositionally biased toward polar residues. Phosphothreonine is present on T1214. 2 positions are modified to phosphoserine: S1216 and S1219. The segment covering 1272 to 1285 (ETEEPIVECQECET) has biased composition (acidic residues). 2 stretches are compositionally biased toward low complexity: residues 1298 to 1307 (DLGDISSFSS) and 1316 to 1329 (SSGTSLSAMHSSGS). Phosphoserine occurs at positions 1317 and 1342. Omega-N-methylarginine is present on R1355. S1362 carries the phosphoserine modification. K1365 participates in a covalent cross-link: Glycyl lysine isopeptide (Lys-Gly) (interchain with G-Cter in SUMO2). S1368 carries the post-translational modification Phosphoserine. Phosphothreonine is present on T1372. The GAR motif lies at 1396–1403 (RGRGRRGR). Residues S1426 and S1430 each carry the phosphoserine modification. K1434 is covalently cross-linked (Glycyl lysine isopeptide (Lys-Gly) (interchain with G-Cter in SUMO1); alternate). K1434 participates in a covalent cross-link: Glycyl lysine isopeptide (Lys-Gly) (interchain with G-Cter in SUMO2); alternate. A phosphoserine mark is found at S1460, S1462, and S1474. A tudor-like region spans residues 1484 to 1603 (NSFVGLRVVA…NRLREQYGLG (120 aa)). The interval 1495-1523 (WSSNGYFYSGKITRDVGAGKYKLLFDDGY) is interaction with dimethylated histone H4. K1563 is covalently cross-linked (Glycyl lysine isopeptide (Lys-Gly) (interchain with G-Cter in SUMO1); alternate). K1563 participates in a covalent cross-link: Glycyl lysine isopeptide (Lys-Gly) (interchain with G-Cter in SUMO2); alternate. The short motif at 1604 to 1631 (PYEAVTPLTKAADISLDNLVEGKRKRRS) is the UDR element. Phosphothreonine is present on T1609. A phosphoserine mark is found at S1618, S1631, and S1635. Disordered regions lie at residues 1622–1719 (LVEG…EEQR) and 1745–1768 (LASRSKLPDGPTGSSEEEEEFLEI). Over residues 1634-1650 (SSPATPTASSSSSTTPT) the composition is skewed to low complexity. A phosphothreonine mark is found at T1638 and T1648. Phosphoserine occurs at positions 1656, 1673, and 1678. A Glycyl lysine isopeptide (Lys-Gly) (interchain with G-Cter in ubiquitin) cross-link involves residue K1685. S1701, S1759, and S1778 each carry phosphoserine. BRCT domains are found at residues 1724 to 1848 (LNKT…NYLL) and 1864 to 1964 (PREN…QHPK).

As to quaternary structure, homoligomer. Interacts with p53/TP53 (via the central domain). Interacts with DCLRE1C. Interacts with histone H2AX and this requires phosphorylation of H2AX on 'Ser-139'. Interacts with histone H4 that has been dimethylated at 'Lys-20' (H4K20me2). Has low affinity for histone H4 containing monomethylated 'Lys-20' (H4K20me1). Does not bind histone H4 containing unmethylated or trimethylated 'Lys-20' (H4K20me3). Has low affinity for histone H3 that has been dimethylated on 'Lys-79'. Has very low affinity for histone H3 that has been monomethylated on 'Lys-79' (in vitro). Does not bind unmethylated histone H3. Interacts with histone H2A monoubiquitinated at 'Lys-15' (H2AK15Ub). Interacts with PWWP3A/EXPAND1. Interacts with CHEK2; modulates CHEK2 phosphorylation at 'Thr-68' in response to infrared. Interacts with MSL1; this interaction may be required for MSL1 DNA repair activity, but not for histone acetyltransferase activity. Interacts (when phosphorylated by ATM) with RIF1. Interacts (via the Tudor-like domain) with NUDT16L1/TIRR; interaction masks the Tudor-like domain and prevents recruitment to chromatin. Interacts with PAXIP1. Interacts with SHLD2. Interacts (when phosphorylated) with TOPBP1. Interacts with GFI1; promoting methylation by PRMT1. Interacts with (phosphorylated) DYNLL1; specifically binds DYNLL1 phosphorylated at 'Ser-88' and promotes its recruitment to double stand breaks (DSBs). (Microbial infection) Interacts (via C-terminus) with Epstein-Barr virus lytic switch protein BZLF1 (via C-terminus); this interaction is involved in the activation of the viral lytic cycle. Asymmetrically dimethylated on Arg residues by PRMT1. Methylation is required for DNA binding. In terms of processing, phosphorylated at basal level in the absence of DNA damage. Phosphorylated by ATM in response to DNA damage: phosphorylation at different sites promotes interaction with different set of proteins: phosphorylation at the N-terminus by ATM (residues from 6-178) promotes interaction with PAXIP1 and non-homologous end joining (NHEJ) of dysfunctional telomeres. Phosphorylation by ATM at residues that are located more C-terminus (residues 300-650) leads to promote interaction with RIF1. Interaction with RIF1 leads to disrupt interaction with NUDT16L1/TIRR. Phosphorylation at Thr-1609 and Ser-1618 in the UDR motif blocks interaction with H2AK15ub. Dephosphorylated by PPP4C. Hyperphosphorylation during mitosis correlates with its exclusion from chromatin and DNA lesions. Hyperphosphorylated in an ATR-dependent manner in response to DNA damage induced by UV irradiation. Dephosphorylated by PPP5C. Phosphorylation at Ser-366 and Thr-670 promotes interaction with TOPBP1. Phosphorylated by VRK1. Post-translationally, monoubiquitinated at Lys-1685 by MSL2 is reponse to DNA damage, leading to its stabilization.

It is found in the nucleus. The protein resides in the chromosome. Its subcellular location is the centromere. The protein localises to the kinetochore. In terms of biological role, double-strand break (DSB) repair protein involved in response to DNA damage, telomere dynamics and class-switch recombination (CSR) during antibody genesis. Plays a key role in the repair of double-strand DNA breaks (DSBs) in response to DNA damage by promoting non-homologous end joining (NHEJ)-mediated repair of DSBs and specifically counteracting the function of the homologous recombination (HR) repair protein BRCA1. In response to DSBs, phosphorylation by ATM promotes interaction with RIF1 and dissociation from NUDT16L1/TIRR, leading to recruitment to DSBs sites. Recruited to DSBs sites by recognizing and binding histone H2A monoubiquitinated at 'Lys-15' (H2AK15Ub) and histone H4 dimethylated at 'Lys-20' (H4K20me2), two histone marks that are present at DSBs sites. Required for immunoglobulin class-switch recombination (CSR) during antibody genesis, a process that involves the generation of DNA DSBs. Participates in the repair and the orientation of the broken DNA ends during CSR. In contrast, it is not required for classic NHEJ and V(D)J recombination. Promotes NHEJ of dysfunctional telomeres via interaction with PAXIP1. In Homo sapiens (Human), this protein is TP53-binding protein 1.